Consider the following 663-residue polypeptide: UvrABC system protein B (663 aa).

Positions 26 to 414 (DGLESGLAKQ…DNVAEQVVRP (389 aa)) constitute a Helicase ATP-binding domain. 39–46 (GVTGSGKT) lines the ATP pocket. The Beta-hairpin signature appears at 92-115 (YYDYYQPEAYVPASDTFIEKDASI). Residues 430–596 (QVDDLMSEIR…GINKSVEDIL (167 aa)) enclose the Helicase C-terminal domain. Residues 624 to 659 (VKQINALEKQMYSHAQNMEFELAAKIRDEYLLLKEQ) enclose the UVR domain.

Belongs to the UvrB family. In terms of assembly, forms a heterotetramer with UvrA during the search for lesions. Interacts with UvrC in an incision complex.

The protein resides in the cytoplasm. The UvrABC repair system catalyzes the recognition and processing of DNA lesions. A damage recognition complex composed of 2 UvrA and 2 UvrB subunits scans DNA for abnormalities. Upon binding of the UvrA(2)B(2) complex to a putative damaged site, the DNA wraps around one UvrB monomer. DNA wrap is dependent on ATP binding by UvrB and probably causes local melting of the DNA helix, facilitating insertion of UvrB beta-hairpin between the DNA strands. Then UvrB probes one DNA strand for the presence of a lesion. If a lesion is found the UvrA subunits dissociate and the UvrB-DNA preincision complex is formed. This complex is subsequently bound by UvrC and the second UvrB is released. If no lesion is found, the DNA wraps around the other UvrB subunit that will check the other stand for damage. The polypeptide is UvrABC system protein B (Legionella pneumophila subsp. pneumophila (strain Philadelphia 1 / ATCC 33152 / DSM 7513)).